A 418-amino-acid chain; its full sequence is UDP-N-acetylglucosamine 1-carboxyvinyltransferase (418 aa).

22-23 contacts phosphoenolpyruvate; that stretch reads KN. R93 is a binding site for UDP-N-acetyl-alpha-D-glucosamine. C117 functions as the Proton donor in the catalytic mechanism. C117 is modified (2-(S-cysteinyl)pyruvic acid O-phosphothioketal). UDP-N-acetyl-alpha-D-glucosamine-binding residues include D305 and V327.

This sequence belongs to the EPSP synthase family. MurA subfamily.

Its subcellular location is the cytoplasm. The catalysed reaction is phosphoenolpyruvate + UDP-N-acetyl-alpha-D-glucosamine = UDP-N-acetyl-3-O-(1-carboxyvinyl)-alpha-D-glucosamine + phosphate. The protein operates within cell wall biogenesis; peptidoglycan biosynthesis. Its function is as follows. Cell wall formation. Adds enolpyruvyl to UDP-N-acetylglucosamine. The sequence is that of UDP-N-acetylglucosamine 1-carboxyvinyltransferase from Halorhodospira halophila (strain DSM 244 / SL1) (Ectothiorhodospira halophila (strain DSM 244 / SL1)).